The chain runs to 186 residues: A-type ATP synthase subunit E (186 aa).

This sequence belongs to the V-ATPase E subunit family. As to quaternary structure, has multiple subunits with at least A(3), B(3), C, D, E, F, H, I and proteolipid K(x).

The protein localises to the cell membrane. Functionally, component of the A-type ATP synthase that produces ATP from ADP in the presence of a proton gradient across the membrane. The chain is A-type ATP synthase subunit E from Methanocella arvoryzae (strain DSM 22066 / NBRC 105507 / MRE50).